The primary structure comprises 720 residues: MAPPRNVVKIAVQMSDAIPQLIQLDQAKPLATVLKEVCDTWSLTHPEHYALQFADGHRKYITENNRSEIKNGSILCLSTAPDLKAQQLLSRLQNASREGCCEVLRNLVPLASDMTFAQEVISRDGLQKLSTIIENGDDLGEMLALGLRAFLELMEHGVVSWETLSISFVRKVVSYVNMNLMDASVQPLALRLLESVTLSSPTLGQLVKSEVPLDRLLVHLQVMNQQLQTKAMALLTALLQGASPAERKDMLDCLWKKNLRQFIYKNIIHSAAPMGDEMAHHLYVLQALTLGLLEPRMRTPLDPYSQEQREQLQALRQAAFEPDGESLGTGLSADRRRSLCVREFRKLGFSNSSPAQDLERVPPGLLALDNMLYFSRHAPSAYSRFVLENSSREDKHECPFARSSIQLTVLLCELLHVGEPCSETAQDFSPMFFSQDHSFHELFCVAIQLLNKTWKEMRATQEDFDKVMQVVREQLARTLALKPTSLELFRTKVNALTYGEVLRLRQTERLHQEGTLAPPILELREKLKPELMGLIRQQRLLRLCEGMLFRKISSRRRQDKLWFCCLSPNHKVLQYGDVEEGANPPTLESLTEQLPVADIRALLMGKDCPHVREKGSGKQNKDLYELAFSISYDHGEEEAYLNFIAPSKRDFYLWTDGLSALLGSTMGSEQTRLDLEQLLTMETKLRLLELENVPIPEHPPPVPPPPTNFNFCYDYSMTEP.

The ELMO domain occupies 307–479 (EQREQLQALR…VVREQLARTL (173 aa)). The 123-residue stretch at 541 to 663 (LRLCEGMLFR…WTDGLSALLG (123 aa)) folds into the PH domain.

In terms of assembly, probably interacts directly with the SH3-domain of DOCK1 via its SH3-binding site. Part of a complex with DOCK1 and RAC1. Interacts with ADGRB3.

The protein resides in the cytoplasm. Functionally, involved in cytoskeletal rearrangements required for phagocytosis of apoptotic cells and cell motility. Acts in association with DOCK1 and CRK. Was initially proposed to be required in complex with DOCK1 to activate Rac Rho small GTPases. May enhance the guanine nucleotide exchange factor (GEF) activity of DOCK1. This Rattus norvegicus (Rat) protein is Engulfment and cell motility protein 3 (Elmo3).